Consider the following 449-residue polypeptide: TNF receptor-associated factor family protein DDB_G0272340 (449 aa).

An RING-type; degenerate zinc finger spans residues 33–76 (CPICEECIMDVNKCEALQCKEGHVHCRLCWMKSLESKKECMTCR). TRAF-type zinc fingers lie at residues 133-187 (GHIK…IDDS) and 189-251 (VHYS…SELS). A coiled-coil region spans residues 263–309 (MEATIDQHICKFEKSEKEYKKLELEYNRLKDDFKILQSELKVIRELK). Residues 311-437 (NYQNKWVITN…QNSVTLNINI (127 aa)) enclose the MATH domain.

Belongs to the TNF receptor-associated factor family. A subfamily.

Its subcellular location is the cytoplasm. Probable adapter protein and signal transducer that links members of the tumor necrosis factor receptor family to different signaling pathways by association with the receptor cytoplasmic domain and kinases. The polypeptide is TNF receptor-associated factor family protein DDB_G0272340 (Dictyostelium discoideum (Social amoeba)).